The chain runs to 309 residues: Methionyl-tRNA formyltransferase (309 aa).

107–110 contacts (6S)-5,6,7,8-tetrahydrofolate; that stretch reads SLLP.

The protein belongs to the Fmt family.

The enzyme catalyses L-methionyl-tRNA(fMet) + (6R)-10-formyltetrahydrofolate = N-formyl-L-methionyl-tRNA(fMet) + (6S)-5,6,7,8-tetrahydrofolate + H(+). Attaches a formyl group to the free amino group of methionyl-tRNA(fMet). The formyl group appears to play a dual role in the initiator identity of N-formylmethionyl-tRNA by promoting its recognition by IF2 and preventing the misappropriation of this tRNA by the elongation apparatus. The polypeptide is Methionyl-tRNA formyltransferase (Borrelia turicatae (strain 91E135)).